The following is an 83-amino-acid chain: Kunitz-type serine protease inhibitor vestiginin-3 (83 aa).

The signal sequence occupies residues 1 to 24 (MSSGGLLLLLGLLTLWAELTPVSS). Residues 31–81 (CKLPKEPGPCRSYLLYFYYNSVEHKCQTFHYGGCEGNENRFHTIEECKSTC) form the BPTI/Kunitz inhibitor domain. Cystine bridges form between Cys31–Cys81, Cys40–Cys64, and Cys56–Cys77.

This sequence belongs to the venom Kunitz-type family. As to expression, expressed by the venom gland.

The protein resides in the secreted. In terms of biological role, serine protease inhibitor. In Demansia vestigiata (Lesser black whip snake), this protein is Kunitz-type serine protease inhibitor vestiginin-3.